The chain runs to 318 residues: Adenylate isopentenyltransferase 4 (318 aa).

Glycine 12–serine 19 provides a ligand contact to ATP.

This sequence belongs to the IPP transferase family. Requires Mg(2+) as cofactor. In terms of tissue distribution, expressed in immature seeds with highest expression in the chalazal endosperm.

It is found in the cytoplasm. The catalysed reaction is dimethylallyl diphosphate + ADP = N(6)-(dimethylallyl)adenosine 5'-diphosphate + diphosphate. It catalyses the reaction dimethylallyl diphosphate + ATP = N(6)-(dimethylallyl)adenosine 5'-triphosphate + diphosphate. Its function is as follows. Involved in cytokinin biosynthesis. Catalyzes the transfer of an isopentenyl group from dimethylallyl diphosphate (DMAPP) to ATP and ADP, but not to AMP. Has no DMAPP:tRNA isopentenyltransferase activity. In Arabidopsis thaliana (Mouse-ear cress), this protein is Adenylate isopentenyltransferase 4 (IPT4).